The sequence spans 160 residues: Transcriptional regulator MraZ (160 aa).

SpoVT-AbrB domains are found at residues 5–50 (NFET…DGGY) and 93–136 (AVEC…SQAE).

Belongs to the MraZ family. Forms oligomers.

Its subcellular location is the cytoplasm. It is found in the nucleoid. This Geotalea daltonii (strain DSM 22248 / JCM 15807 / FRC-32) (Geobacter daltonii) protein is Transcriptional regulator MraZ.